Here is a 202-residue protein sequence, read N- to C-terminus: Tetranectin (202 aa).

A signal peptide spans 1–21 (MELWGAYLLLCLFSLLTQVTT). A glycan (O-linked (GalNAc...) threonine) is linked at Thr25. 3 disulfide bridges follow: Cys71–Cys81, Cys98–Cys197, and Cys173–Cys189. Residues 77–198 (VHMKCFLAFT…CRDQLPYICQ (122 aa)) form the C-type lectin domain.

In terms of assembly, homotrimer. As to expression, found in plasma.

It is found in the secreted. Its function is as follows. Tetranectin binds to plasminogen and to isolated kringle 4. May be involved in the packaging of molecules destined for exocytosis. Plays a role in retinal function. This is Tetranectin (CLEC3B) from Homo sapiens (Human).